A 183-amino-acid chain; its full sequence is MKNLKVARRYAKALLLIGKEDGQAEVYREELEAFSSLFKANPDLEAAISNPIYEAKGRQALLRSVVEKSGVSAVTASYLLLLFDKGRIGFLDVITSEYKEMADELKGIARASVSAATELSNETIEKIRSGLGRLTGKEVVLTVSQDPALIGGIVTKIGDLVLDGSIRTQLLNLKETLKRSEAV.

It belongs to the ATPase delta chain family. F-type ATPases have 2 components, F(1) - the catalytic core - and F(0) - the membrane proton channel. F(1) has five subunits: alpha(3), beta(3), gamma(1), delta(1), epsilon(1). F(0) has three main subunits: a(1), b(2) and c(10-14). The alpha and beta chains form an alternating ring which encloses part of the gamma chain. F(1) is attached to F(0) by a central stalk formed by the gamma and epsilon chains, while a peripheral stalk is formed by the delta and b chains.

The protein localises to the cell inner membrane. Its function is as follows. F(1)F(0) ATP synthase produces ATP from ADP in the presence of a proton or sodium gradient. F-type ATPases consist of two structural domains, F(1) containing the extramembraneous catalytic core and F(0) containing the membrane proton channel, linked together by a central stalk and a peripheral stalk. During catalysis, ATP synthesis in the catalytic domain of F(1) is coupled via a rotary mechanism of the central stalk subunits to proton translocation. Functionally, this protein is part of the stalk that links CF(0) to CF(1). It either transmits conformational changes from CF(0) to CF(1) or is implicated in proton conduction. The chain is ATP synthase subunit delta from Desulfatibacillum aliphaticivorans.